We begin with the raw amino-acid sequence, 214 residues long: rRNA methyltransferase 2, mitochondrial (214 aa).

Residues 1-18 (MFSTKKSQGNLHKYIQRQ) constitute a mitochondrion transit peptide. S-adenosyl-L-methionine is bound by residues 63-66 (PGSW), Asp83, 100-101 (DI), and Asp125. Catalysis depends on Lys169, which acts as the Proton acceptor.

This sequence belongs to the class I-like SAM-binding methyltransferase superfamily. RNA methyltransferase RlmE family.

The protein localises to the mitochondrion. It catalyses the reaction a uridine in rRNA + S-adenosyl-L-methionine = a 2'-O-methyluridine in rRNA + S-adenosyl-L-homocysteine + H(+). Its function is as follows. S-adenosyl-L-methionine-dependent 2'-O-ribose methyltransferase that catalyzes the formation of 2'-O-methyluridine at position 808 (Um808) in the mitochondrial large subunit ribosomal RNA (mtLSU rRNA), a universally conserved modification in the peptidyl transferase domain of the mtLSU rRNA. This activity may require prior 2'-O-methylguanosine modification at position 809 (Gm809) by MRM3. Essential for late-stage assembly of mtLSU required for efficient translation of mitochondrial DNA encoded proteins; methyltransferase activity is not required for this function. Essential for mitochondrial respiratory function. In Caenorhabditis elegans, this protein is rRNA methyltransferase 2, mitochondrial.